The primary structure comprises 564 residues: Isocitrate dehydrogenase kinase/phosphatase (564 aa).

ATP is bound by residues 315–321 and Lys336; that span reads APGVKGM. Asp371 is an active-site residue.

This sequence belongs to the AceK family.

Its subcellular location is the cytoplasm. It catalyses the reaction L-seryl-[isocitrate dehydrogenase] + ATP = O-phospho-L-seryl-[isocitrate dehydrogenase] + ADP + H(+). Functionally, bifunctional enzyme which can phosphorylate or dephosphorylate isocitrate dehydrogenase (IDH) on a specific serine residue. This is a regulatory mechanism which enables bacteria to bypass the Krebs cycle via the glyoxylate shunt in response to the source of carbon. When bacteria are grown on glucose, IDH is fully active and unphosphorylated, but when grown on acetate or ethanol, the activity of IDH declines drastically concomitant with its phosphorylation. The sequence is that of Isocitrate dehydrogenase kinase/phosphatase from Idiomarina loihiensis (strain ATCC BAA-735 / DSM 15497 / L2-TR).